Consider the following 235-residue polypeptide: Ribosomal RNA large subunit methyltransferase E (235 aa).

The S-adenosyl-L-methionine site is built by Gly76, Trp78, Asp99, Asp115, and Asp139. Lys179 (proton acceptor) is an active-site residue.

It belongs to the class I-like SAM-binding methyltransferase superfamily. RNA methyltransferase RlmE family.

The protein resides in the cytoplasm. The enzyme catalyses uridine(2552) in 23S rRNA + S-adenosyl-L-methionine = 2'-O-methyluridine(2552) in 23S rRNA + S-adenosyl-L-homocysteine + H(+). Specifically methylates the uridine in position 2552 of 23S rRNA at the 2'-O position of the ribose in the fully assembled 50S ribosomal subunit. The chain is Ribosomal RNA large subunit methyltransferase E from Rhodopseudomonas palustris (strain BisA53).